Here is an 896-residue protein sequence, read N- to C-terminus: Putative mannosylglycerate hydrolase (896 aa).

A divalent metal cation is bound by residues His12, Asp14, Asp125, and His348. Catalysis depends on Asp125, which acts as the Nucleophile.

This sequence belongs to the glycosyl hydrolase 38 family. A divalent metal cation is required as a cofactor.

It catalyses the reaction (2R)-2-O-(6-phospho-alpha-D-mannosyl)-glycerate + H2O = alpha-D-mannose 6-phosphate + (R)-glycerate. Its function is as follows. May hydrolyze 6-phospho-mannosyl-D-glycerate to mannose-6-phosphate and glycerate. This chain is Putative mannosylglycerate hydrolase (mngB), found in Halalkalibacterium halodurans (strain ATCC BAA-125 / DSM 18197 / FERM 7344 / JCM 9153 / C-125) (Bacillus halodurans).